We begin with the raw amino-acid sequence, 464 residues long: tRNA-2-methylthio-N(6)-dimethylallyladenosine synthase (464 aa).

The MTTase N-terminal domain maps to 19 to 135 (GSYWITTFGC…LENLLERVDS (117 aa)). [4Fe-4S] cluster contacts are provided by Cys-28, Cys-64, Cys-98, Cys-170, Cys-174, and Cys-177. Positions 156–393 (RDSTICGWVN…NELVEATSRK (238 aa)) constitute a Radical SAM core domain. One can recognise a TRAM domain in the interval 396 to 464 (QRYLNNTESV…SFSLSGQIYK (69 aa)).

This sequence belongs to the methylthiotransferase family. MiaB subfamily. Monomer. Requires [4Fe-4S] cluster as cofactor.

Its subcellular location is the cytoplasm. The catalysed reaction is N(6)-dimethylallyladenosine(37) in tRNA + (sulfur carrier)-SH + AH2 + 2 S-adenosyl-L-methionine = 2-methylsulfanyl-N(6)-dimethylallyladenosine(37) in tRNA + (sulfur carrier)-H + 5'-deoxyadenosine + L-methionine + A + S-adenosyl-L-homocysteine + 2 H(+). Its function is as follows. Catalyzes the methylthiolation of N6-(dimethylallyl)adenosine (i(6)A), leading to the formation of 2-methylthio-N6-(dimethylallyl)adenosine (ms(2)i(6)A) at position 37 in tRNAs that read codons beginning with uridine. The polypeptide is tRNA-2-methylthio-N(6)-dimethylallyladenosine synthase (Prochlorococcus marinus (strain MIT 9515)).